Here is a 773-residue protein sequence, read N- to C-terminus: C-Maf-inducing protein (773 aa).

Residues 1 to 30 (MDVTSSSGGGGDPRQIEETKPLLGGDVSAP) form a disordered region. Residues 54–163 (LLQEGDIQVC…HSLQWKKKIY (110 aa)) form the PH domain. A phosphoserine mark is found at serine 349, serine 377, serine 382, and serine 660. LRR repeat units follow at residues 663–686 (NLEN…IKLP), 687–707 (SLKQ…RLLS), 712–732 (MLQV…LALS), and 736–756 (SLCS…EDLK).

Interacts with FLNA. Isoform 1 is expressed in peripheral blood mononuclear cells and kidney. Lower expression in brain and liver. Expression is down-regulated in activated cells. Isoform 2 is expressed in lymphocyte precursors, however, expression shuts down during maturation and differentiation in thymus and fetal liver.

It is found in the nucleus. It localises to the cytoplasm. Functionally, plays a role in T-cell signaling pathway. Isoform 2 may play a role in T-helper 2 (Th2) signaling pathway and seems to represent the first proximal signaling protein that links T-cell receptor-mediated signal to the activation of c-Maf Th2 specific factor. This chain is C-Maf-inducing protein (CMIP), found in Homo sapiens (Human).